The sequence spans 455 residues: MLDINLIRNNPELVKNDLKKRGELDKIAWIDEILRLDEEWRKKLKEINRLRHERNKIAIEIGKRKKAGEPVEDLLAKSKEIVKRIEELEKEVEELRKRIDYYLWRLPNITHPSVPVGKDENDNVPIRFWGKAKVWKGHLESFLEQSQGKMEYEVLEWRPKLHVDLLEILGGADFARAAKVSGSRFYYLLNEIVILDLALIRFALDRLIEKGFTPVIPPYMVRRFVEEGSTTFEDFEDVIYKVEGEDLYLIPTAEHPLAGMHANEILDGKDLPLLYVAFSPCFRKEAGTAGKDTKGIFRVHQFHKVEQFVYSRPEESWEWHERLVRNAEELFQELEIPYRVVNICTGDLGYVAAKKYDIEAWMPGQGRFREVVSASNCTDWQARRLNIRFRDRTDEKPRYVHTLNSTAIATSRAIVAILENHQQEDGTVKIPRALWKYTGFKEIVPVEKKEGCCKA.

252 to 254 lines the L-serine pocket; it reads TAE. ATP contacts are provided by residues 283-285 and valine 299; that span reads RKE. L-serine is bound at residue glutamate 306. 370–373 serves as a coordination point for ATP; it reads EVVS. Threonine 406 is an L-serine binding site.

This sequence belongs to the class-II aminoacyl-tRNA synthetase family. Type-1 seryl-tRNA synthetase subfamily. In terms of assembly, homodimer. The tRNA molecule binds across the dimer.

Its subcellular location is the cytoplasm. It carries out the reaction tRNA(Ser) + L-serine + ATP = L-seryl-tRNA(Ser) + AMP + diphosphate + H(+). The enzyme catalyses tRNA(Sec) + L-serine + ATP = L-seryl-tRNA(Sec) + AMP + diphosphate + H(+). The protein operates within aminoacyl-tRNA biosynthesis; selenocysteinyl-tRNA(Sec) biosynthesis; L-seryl-tRNA(Sec) from L-serine and tRNA(Sec): step 1/1. Catalyzes the attachment of serine to tRNA(Ser). Is also able to aminoacylate tRNA(Sec) with serine, to form the misacylated tRNA L-seryl-tRNA(Sec), which will be further converted into selenocysteinyl-tRNA(Sec). The protein is Serine--tRNA ligase of Pyrococcus furiosus (strain ATCC 43587 / DSM 3638 / JCM 8422 / Vc1).